A 363-amino-acid chain; its full sequence is tRNA/tmRNA (uracil-C(5))-methyltransferase (363 aa).

S-adenosyl-L-methionine-binding residues include Gln187, Tyr215, Asn220, Glu236, and Asp296. The active-site Nucleophile is the Cys321. The active-site Proton acceptor is the Glu355.

This sequence belongs to the class I-like SAM-binding methyltransferase superfamily. RNA M5U methyltransferase family. TrmA subfamily.

The catalysed reaction is uridine(54) in tRNA + S-adenosyl-L-methionine = 5-methyluridine(54) in tRNA + S-adenosyl-L-homocysteine + H(+). It carries out the reaction uridine(341) in tmRNA + S-adenosyl-L-methionine = 5-methyluridine(341) in tmRNA + S-adenosyl-L-homocysteine + H(+). Its function is as follows. Dual-specificity methyltransferase that catalyzes the formation of 5-methyluridine at position 54 (m5U54) in all tRNAs, and that of position 341 (m5U341) in tmRNA (transfer-mRNA). The sequence is that of tRNA/tmRNA (uracil-C(5))-methyltransferase from Pseudomonas aeruginosa (strain ATCC 15692 / DSM 22644 / CIP 104116 / JCM 14847 / LMG 12228 / 1C / PRS 101 / PAO1).